Consider the following 1312-residue polypeptide: Bifunctional protein PutA (1312 aa).

Positions 228–574 are proline dehydrogenase; the sequence is LSRSLNRIIG…SFVNRIADNT (347 aa). The tract at residues 653-1119 is aldehyde dehydrogenase; sequence QPVAEGEMQP…LSSRPQDAVG (467 aa). Active-site residues include Glu-883 and Cys-917.

The protein in the N-terminal section; belongs to the proline dehydrogenase family. It in the C-terminal section; belongs to the aldehyde dehydrogenase family. Requires FAD as cofactor.

The catalysed reaction is L-proline + a quinone = (S)-1-pyrroline-5-carboxylate + a quinol + H(+). It catalyses the reaction L-glutamate 5-semialdehyde + NAD(+) + H2O = L-glutamate + NADH + 2 H(+). It functions in the pathway amino-acid degradation; L-proline degradation into L-glutamate; L-glutamate from L-proline: step 1/2. Its pathway is amino-acid degradation; L-proline degradation into L-glutamate; L-glutamate from L-proline: step 2/2. Its function is as follows. Oxidizes proline to glutamate for use as a carbon and nitrogen source and also function as a transcriptional repressor of the put operon. The protein is Bifunctional protein PutA (putA) of Klebsiella aerogenes (Enterobacter aerogenes).